The sequence spans 78 residues: Small ribosomal subunit protein bS18 (78 aa).

The protein belongs to the bacterial ribosomal protein bS18 family. Part of the 30S ribosomal subunit. Forms a tight heterodimer with protein bS6.

Binds as a heterodimer with protein bS6 to the central domain of the 16S rRNA, where it helps stabilize the platform of the 30S subunit. The protein is Small ribosomal subunit protein bS18 of Frankia casuarinae (strain DSM 45818 / CECT 9043 / HFP020203 / CcI3).